A 607-amino-acid chain; its full sequence is Guanine nucleotide-binding protein-like 1 (607 aa).

Over residues Met1–Lys14 the composition is skewed to basic residues. Positions Met1–Tyr81 are disordered. Over residues Gln15–Leu26 the composition is skewed to basic and acidic residues. 3 positions are modified to phosphoserine: Ser32, Ser33, and Ser34. Phosphothreonine occurs at positions 48 and 50. Ser51 and Ser68 each carry phosphoserine. A CP-type G domain is found at Trp178–Pro418. A GTP-binding site is contributed by Asn225–Asp228. At Ser324 the chain carries Phosphoserine. GTP is bound by residues Gly367–Ser374 and Asp411–Leu415. The tract at residues Gly547–Cys607 is disordered. The segment covering Gly550–Thr584 has biased composition (acidic residues). Residues Ser561, Ser562, and Ser563 each carry the phosphoserine modification.

Belongs to the TRAFAC class YlqF/YawG GTPase family.

Its function is as follows. Possible regulatory or functional link with the histocompatibility cluster. The sequence is that of Guanine nucleotide-binding protein-like 1 (GNL1) from Homo sapiens (Human).